A 362-amino-acid chain; its full sequence is Chromobox protein homolog 8 (362 aa).

One can recognise a Chromo domain in the interval phenylalanine 11 to proline 69. A compositionally biased stretch (basic and acidic residues) spans lysine 90 to arginine 100. The tract at residues lysine 90–glutamate 197 is disordered. Position 110 is a phosphoserine (serine 110). The span at aspartate 142–proline 162 shows a compositional bias: basic and acidic residues. Residues serine 164 and serine 229 each carry the phosphoserine modification. Tyrosine 234 bears the Phosphotyrosine mark. A phosphoserine mark is found at serine 238, serine 284, serine 305, and serine 325.

Component of a PRC1-like complex. Interacts with RING1, RNF2, PCGF1, PCGF2, PCGF3, BMI1, PCGF5, PCGF6 and PHC2. Interacts with histone H3. Interacts with MLLT3. Interacts with PHC2. Interacts (via chromodomain) with single-stranded RNA.

The protein resides in the nucleus. It is found in the chromosome. Component of a Polycomb group (PcG) multiprotein PRC1-like complex, a complex class required to maintain the transcriptionally repressive state of many genes, including Hox genes, throughout development. PcG PRC1 complex acts via chromatin remodeling and modification of histones; it mediates monoubiquitination of histone H2A 'Lys-119', rendering chromatin heritably changed in its expressibility. The sequence is that of Chromobox protein homolog 8 (Cbx8) from Mus musculus (Mouse).